We begin with the raw amino-acid sequence, 703 residues long: DNA ligase (703 aa).

Residues 54–58, 103–104, and Glu-132 each bind NAD(+); these read DAEYD and SL. Lys-134 (N6-AMP-lysine intermediate) is an active-site residue. Positions 155, 192, 308, and 332 each coordinate NAD(+). Residues Cys-426, Cys-429, Cys-444, and Cys-450 each contribute to the Zn(2+) site. The region spanning 608-698 is the BRCT domain; the sequence is EGPGPLDGVV…ADAARALAVP (91 aa).

This sequence belongs to the NAD-dependent DNA ligase family. LigA subfamily. It depends on Mg(2+) as a cofactor. Requires Mn(2+) as cofactor.

It catalyses the reaction NAD(+) + (deoxyribonucleotide)n-3'-hydroxyl + 5'-phospho-(deoxyribonucleotide)m = (deoxyribonucleotide)n+m + AMP + beta-nicotinamide D-nucleotide.. Its function is as follows. DNA ligase that catalyzes the formation of phosphodiester linkages between 5'-phosphoryl and 3'-hydroxyl groups in double-stranded DNA using NAD as a coenzyme and as the energy source for the reaction. It is essential for DNA replication and repair of damaged DNA. In Parafrankia sp. (strain EAN1pec), this protein is DNA ligase.